A 386-amino-acid chain; its full sequence is Convicilin (386 aa).

The signal sequence occupies residues 1-29; sequence MATTIKSRFPLLLLLGIIFLASVVSVTYA. The segment at 33–199 is disordered; sequence EGSEPRVPAQ…EERSSESQER (167 aa). Basic and acidic residues-rich tracts occupy residues 41–65, 74–91, 104–144, and 153–186; these read AQRE…PSYE, QRER…RHGE, EKQK…RWER, and EEWR…HQRE. Residues 202 to 359 enclose the Cupin type-1 domain; it reads PFLFKSNKFL…SYNTRYETIE (158 aa). The interval 367–386 is disordered; that stretch reads EKDRKRRQQGEETDAIVKVS.

Belongs to the 7S seed storage protein family.

It is found in the vacuole. The protein resides in the aleurone grain. Its function is as follows. Seed storage protein. The protein is Convicilin (CVCB) of Pisum sativum (Garden pea).